We begin with the raw amino-acid sequence, 1379 residues long: ABC multidrug transporter MDR2 (1379 aa).

The helical transmembrane segment at isoleucine 65–leucine 85 threads the bilayer. An ABC transmembrane type-1 1 domain is found at valine 69–serine 367. N-linked (GlcNAc...) asparagine glycosylation is present at asparagine 97. 5 consecutive transmembrane segments (helical) span residues valine 119–cysteine 139, lysine 193–leucine 213, valine 215–glycine 235, isoleucine 301–glycine 321, and valine 336–serine 356. Residues isoleucine 403–leucine 682 enclose the ABC transporter 1 domain. Glycine 438–serine 445 is an ATP binding site. N-linked (GlcNAc...) asparagine glycans are attached at residues asparagine 552 and asparagine 633. A disordered region spans residues tyrosine 738 to lysine 758. 4 consecutive transmembrane segments (helical) span residues leucine 781–glycine 801, glycine 820–valine 840, leucine 881–isoleucine 901, and valine 920–leucine 942. The ABC transmembrane type-1 2 domain maps to leucine 781 to lysine 1068. Asparagine 989 is a glycosylation site (N-linked (GlcNAc...) asparagine). Transmembrane regions (helical) follow at residues phenylalanine 1008 to glycine 1028 and isoleucine 1032 to serine 1052. One can recognise an ABC transporter 2 domain in the interval valine 1135–histidine 1374. Residue glycine 1170 to serine 1177 coordinates ATP.

This sequence belongs to the ABC transporter superfamily. ABCB family. Multidrug resistance exporter (TC 3.A.1.201) subfamily.

It is found in the cell membrane. Functionally, pleiotropic ABC efflux transporter that may be involved in the modulation susceptibility to a wide range of unrelated cytotoxic compounds. This is ABC multidrug transporter MDR2 from Trichophyton interdigitale (strain MR816).